The sequence spans 350 residues: Phenylalanine--tRNA ligase alpha subunit (350 aa).

E260 contributes to the Mg(2+) binding site.

Belongs to the class-II aminoacyl-tRNA synthetase family. Phe-tRNA synthetase alpha subunit type 1 subfamily. As to quaternary structure, tetramer of two alpha and two beta subunits. Mg(2+) serves as cofactor.

The protein resides in the cytoplasm. It carries out the reaction tRNA(Phe) + L-phenylalanine + ATP = L-phenylalanyl-tRNA(Phe) + AMP + diphosphate + H(+). This Mesoplasma florum (strain ATCC 33453 / NBRC 100688 / NCTC 11704 / L1) (Acholeplasma florum) protein is Phenylalanine--tRNA ligase alpha subunit.